A 339-amino-acid polypeptide reads, in one-letter code: Phenylalanine--tRNA ligase alpha subunit (339 aa).

Position 253 (E253) interacts with Mg(2+).

It belongs to the class-II aminoacyl-tRNA synthetase family. Phe-tRNA synthetase alpha subunit type 1 subfamily. As to quaternary structure, tetramer of two alpha and two beta subunits. It depends on Mg(2+) as a cofactor.

It is found in the cytoplasm. The catalysed reaction is tRNA(Phe) + L-phenylalanine + ATP = L-phenylalanyl-tRNA(Phe) + AMP + diphosphate + H(+). This Geobacter sulfurreducens (strain ATCC 51573 / DSM 12127 / PCA) protein is Phenylalanine--tRNA ligase alpha subunit.